Reading from the N-terminus, the 131-residue chain is Arsenate reductase 2 (131 aa).

Active-site nucleophile residues include C10, C82, and C89. Disulfide bonds link C10–C82 and C82–C89.

This sequence belongs to the low molecular weight phosphotyrosine protein phosphatase family. Thioredoxin-coupled ArsC subfamily.

Its subcellular location is the cytoplasm. The catalysed reaction is arsenate + [thioredoxin]-dithiol + H(+) = arsenite + [thioredoxin]-disulfide + H2O. Its function is as follows. Catalyzes the reduction of arsenate [As(V)] to arsenite [As(III)]. This chain is Arsenate reductase 2, found in Staphylococcus saprophyticus subsp. saprophyticus (strain ATCC 15305 / DSM 20229 / NCIMB 8711 / NCTC 7292 / S-41).